The following is a 349-amino-acid chain: D-arabinitol dehydrogenase 1 (349 aa).

Zn(2+) is bound by residues C46, H67, C97, C100, C103, C111, and E151.

Belongs to the zinc-containing alcohol dehydrogenase family. Zn(2+) is required as a cofactor.

The protein resides in the cell projection. The catalysed reaction is D-arabinitol + NADP(+) = D-xylulose + NADPH + H(+). The enzyme catalyses D-arabinitol + NADP(+) = D-ribulose + NADPH + H(+). Its function is as follows. D-arabinitol dehydrogenase which mostly produces D-arabinitol in haustoria, the appendages of the parasitic fungus that penetrate the host's tissue and draws nutrients from it. D-arabinitol accumulation may serve as a carbohydrate storage compound. D-arabinitol is also capable of quenching reactive oxygen species involved in host plant defense reactions, thus providing protection for the rust fungus during the pathogenic interaction. This chain is D-arabinitol dehydrogenase 1 (ARD1), found in Uromyces fabae (Rust fungus).